Reading from the N-terminus, the 172-residue chain is dCTP pyrophosphatase (172 aa).

It carries out the reaction dCTP + H2O = dCMP + diphosphate + H(+). This chain is dCTP pyrophosphatase (56), found in Enterobacteria phage LZ5 (Bacteriophage LZ5).